The chain runs to 350 residues: Sulfate/thiosulfate import ATP-binding protein cysA (350 aa).

In terms of domain architecture, ABC transporter spans 3 to 237 (IEVRNLSKRF…PATPFVYGFL (235 aa)). 35–42 (GPSGCGKT) serves as a coordination point for ATP.

It belongs to the ABC transporter superfamily. Sulfate/tungstate importer (TC 3.A.1.6) family.

The protein resides in the mitochondrion. The catalysed reaction is sulfate(out) + ATP + H2O = sulfate(in) + ADP + phosphate + H(+). The enzyme catalyses thiosulfate(out) + ATP + H2O = thiosulfate(in) + ADP + phosphate + H(+). Part of the ABC transporter complex involved in sulfate/thiosulfate import. Responsible for energy coupling to the transport system. The sequence is that of Sulfate/thiosulfate import ATP-binding protein cysA (CYSA) from Cucumis sativus (Cucumber).